A 1591-amino-acid polypeptide reads, in one-letter code: Dicer-like protein 1 (1591 aa).

2 stretches are compositionally biased toward basic and acidic residues: residues 1 to 20 and 41 to 52; these read MEVH…RYDD and SKPRKISERKRA. The segment at 1–52 is disordered; the sequence is MEVHDGLKSPDKAAKSRYDDDRIDQDSEDEAVRLVANPDPSKPRKISERKRA. The region spanning 115–298 is the Helicase ATP-binding domain; sequence LFERAKQKNT…SYERATHELE (184 aa). 128–135 contributes to the ATP binding site; it reads LDTGTGKT. Positions 242-245 match the DEAH box motif; it reads DEAH. The Helicase C-terminal domain occupies 439-607; the sequence is KLIEILAECF…CLSLPKDRIM (169 aa). Residues 639 to 729 enclose the Dicer dsRNA-binding fold domain; it reads SLVVLAEFVA…KSTLAKVLPA (91 aa). The PAZ domain maps to 888–1012; that stretch reads TTTDRVPYNF…LVLETLLISQ (125 aa). RNase III domains lie at 1050-1190 and 1243-1406; these read IDIA…LTAQ and CSQI…VDTG. Positions 1283, 1392, and 1395 each coordinate Mg(2+). Residues 1440 to 1514 form the DRBM domain; that stretch reads THITSIITTQ…AKQAVAIYED (75 aa). Residues cysteine 1452, histidine 1485, cysteine 1526, and cysteine 1528 each coordinate Zn(2+).

Belongs to the helicase family. Dicer subfamily. It depends on Mg(2+) as a cofactor. Requires Mn(2+) as cofactor.

Functionally, dicer-like endonuclease which seems not to be involved in cleaving double-stranded RNA in the RNA interference (RNAi) pathway, contrary to its DCL2 counterpart. This is Dicer-like protein 1 (DCL1) from Pyricularia oryzae (strain 70-15 / ATCC MYA-4617 / FGSC 8958) (Rice blast fungus).